We begin with the raw amino-acid sequence, 533 residues long: Protein transport protein SEC9 (533 aa).

Disordered regions lie at residues 1-32, 68-184, 200-246, and 259-284; these read MGFK…IATK, RPGA…MNAT, MAQD…KRAP, and PTNE…GQAP. The span at 11–24 shows a compositional bias: basic and acidic residues; it reads PPEEDTPERNRDLL. Positions 92 to 102 are enriched in polar residues; that stretch reads GNTSRVGQPQQ. Residues 157–172 are compositionally biased toward gly residues; that stretch reads GGPGNPYGGSTAGAGT. Low complexity predominate over residues 227–240; the sequence is RPQAAAETPRPQAA. T-SNARE coiled-coil homology domains lie at 318-380 and 470-532; these read RFTK…VAEL and DEME…LTNI.

The protein belongs to the SNAP-25 family.

This Eremothecium gossypii (strain ATCC 10895 / CBS 109.51 / FGSC 9923 / NRRL Y-1056) (Yeast) protein is Protein transport protein SEC9 (SEC9).